We begin with the raw amino-acid sequence, 417 residues long: NADH-quinone oxidoreductase subunit D (417 aa).

It belongs to the complex I 49 kDa subunit family. As to quaternary structure, NDH-1 is composed of 14 different subunits. Subunits NuoB, C, D, E, F, and G constitute the peripheral sector of the complex.

The protein resides in the cell inner membrane. The enzyme catalyses a quinone + NADH + 5 H(+)(in) = a quinol + NAD(+) + 4 H(+)(out). NDH-1 shuttles electrons from NADH, via FMN and iron-sulfur (Fe-S) centers, to quinones in the respiratory chain. The immediate electron acceptor for the enzyme in this species is believed to be ubiquinone. Couples the redox reaction to proton translocation (for every two electrons transferred, four hydrogen ions are translocated across the cytoplasmic membrane), and thus conserves the redox energy in a proton gradient. This chain is NADH-quinone oxidoreductase subunit D, found in Dechloromonas aromatica (strain RCB).